An 846-amino-acid chain; its full sequence is Arsenate respiratory reductase molybdopterin-containing subunit ArrA (846 aa).

A signal peptide (tat-type signal) is located at residues 1–29 (MRIKRREFLKASAAVGAVAVASPTLNAFA). In terms of domain architecture, 4Fe-4S Mo/W bis-MGD-type spans 43–99 (GKWIPSTCQGCTTWCPVEFLFRMAVRSKYAATQLSKANNGYCCVRGHLMLQQLYDPD). [4Fe-4S] cluster-binding residues include Cys50, Cys53, Cys57, and Cys85. Arg155 is a binding site for arsenite. Tyr156 is an arsenate binding site. His179 serves as a coordination point for arsenite. Arsenate is bound at residue Ser180. Cys183 serves as a coordination point for Mo-bis(molybdopterin guanine dinucleotide). Lys188 serves as a coordination point for arsenate. Tyr200 is an arsenite binding site.

This sequence belongs to the prokaryotic molybdopterin-containing oxidoreductase family. In terms of assembly, heterodimer composed of one large subunit (ArrA) and one small subunit (ArrB). It depends on [4Fe-4S] cluster as a cofactor. The cofactor is Mo-bis(molybdopterin guanine dinucleotide). Post-translationally, predicted to be exported by the Tat system. The position of the signal peptide cleavage has been experimentally proven.

It localises to the periplasm. It carries out the reaction arsenite + A + H2O = arsenate + AH2 + H(+). Its function is as follows. Component of the arsenate respiratory reductase (Arr) complex, which catalyzes the reduction of arsenate (As(V)) to arsenite (As(III)). Can use acetate as the electron donor. ArrA is the arsenate-binding subunit. This Chrysiogenes arsenatis protein is Arsenate respiratory reductase molybdopterin-containing subunit ArrA.